Reading from the N-terminus, the 318-residue chain is tRNA U34 carboxymethyltransferase (318 aa).

Carboxy-S-adenosyl-L-methionine-binding positions include Lys88, Trp102, Lys107, Gly126, 176-177, Met192, Tyr196, and Arg311; that span reads LE.

It belongs to the class I-like SAM-binding methyltransferase superfamily. CmoB family. Homotetramer.

It catalyses the reaction carboxy-S-adenosyl-L-methionine + 5-hydroxyuridine(34) in tRNA = 5-carboxymethoxyuridine(34) in tRNA + S-adenosyl-L-homocysteine + H(+). Functionally, catalyzes carboxymethyl transfer from carboxy-S-adenosyl-L-methionine (Cx-SAM) to 5-hydroxyuridine (ho5U) to form 5-carboxymethoxyuridine (cmo5U) at position 34 in tRNAs. In Pseudomonas putida (strain GB-1), this protein is tRNA U34 carboxymethyltransferase.